Here is a 155-residue protein sequence, read N- to C-terminus: Phytohormone-binding protein CSBP (155 aa).

Trans-zeatin contacts are provided by residues L22, Q67, E69, and 139–142 (TLMY). Q67 contributes to the gibberellin A3 binding site. Gibberellin A3 is bound at residue T139.

The protein belongs to the BetVI family. Monomer.

Its function is as follows. Binds the cytokinin trans-zeatin in vitro. Binds gibberellin A3 (GA3) in vitro. The protein is Phytohormone-binding protein CSBP of Vigna radiata var. radiata (Mung bean).